We begin with the raw amino-acid sequence, 531 residues long: NADH-quinone oxidoreductase subunit N (531 aa).

Helical transmembrane passes span 8–28 (VEYFLLAPMLIVFSVAVAGVL), 41–61 (AQVTLALGGSAVALIAVIVVA), 81–101 (ATLFLQGTVLLVTIMAVVFMA), 146–166 (GATQTELFPLAMLSVGGMMVF), 172–192 (LLTMFVALEVLSLPLYLMCGL), 208–228 (FLLGAFSSAFFLYGVALLYGA), 250–270 (ALAGVALLAVGLLFKVGAVPF), 282–302 (PTPITGFMAAATKVAAFGALL), 318–338 (PVLWAIAILTMTVGTVTAVNQ), 350–370 (VAHVGFILTGVIADNPAGLSA), 372–392 (LFYLVAYSFSTMGAFAIVGLV), 418–438 (IVGVMLSMFLLAFAGIPLTSG), 453–473 (GAVPLVIVGVISSGVAAYFYV), and 500–520 (AAIAVCTVVTVVLGIAPQPVL).

Belongs to the complex I subunit 2 family. In terms of assembly, NDH-1 is composed of 14 different subunits. Subunits NuoA, H, J, K, L, M, N constitute the membrane sector of the complex.

The protein localises to the cell membrane. It catalyses the reaction a quinone + NADH + 5 H(+)(in) = a quinol + NAD(+) + 4 H(+)(out). Its function is as follows. NDH-1 shuttles electrons from NADH, via FMN and iron-sulfur (Fe-S) centers, to quinones in the respiratory chain. The immediate electron acceptor for the enzyme in this species is believed to be a menaquinone. Couples the redox reaction to proton translocation (for every two electrons transferred, four hydrogen ions are translocated across the cytoplasmic membrane), and thus conserves the redox energy in a proton gradient. This Mycobacterium tuberculosis (strain CDC 1551 / Oshkosh) protein is NADH-quinone oxidoreductase subunit N.